The sequence spans 370 residues: tRNA-specific 2-thiouridylase MnmA (370 aa).

ATP-binding positions include 19–26 (AMSGGVDS) and Leu45. Cys113 acts as the Nucleophile in catalysis. The cysteines at positions 113 and 209 are disulfide-linked. Gly137 is an ATP binding site. The interaction with tRNA stretch occupies residues 159 to 161 (RDQ). Cys209 functions as the Cysteine persulfide intermediate in the catalytic mechanism.

Belongs to the MnmA/TRMU family.

Its subcellular location is the cytoplasm. The enzyme catalyses S-sulfanyl-L-cysteinyl-[protein] + uridine(34) in tRNA + AH2 + ATP = 2-thiouridine(34) in tRNA + L-cysteinyl-[protein] + A + AMP + diphosphate + H(+). Its function is as follows. Catalyzes the 2-thiolation of uridine at the wobble position (U34) of tRNA, leading to the formation of s(2)U34. The chain is tRNA-specific 2-thiouridylase MnmA from Zymomonas mobilis subsp. mobilis (strain ATCC 31821 / ZM4 / CP4).